We begin with the raw amino-acid sequence, 237 residues long: Phosphatidylserine decarboxylase proenzyme (237 aa).

Ser-206 serves as the catalytic Schiff-base intermediate with substrate; via pyruvic acid. A Pyruvic acid (Ser); by autocatalysis modification is found at Ser-206.

This sequence belongs to the phosphatidylserine decarboxylase family. PSD-A subfamily. In terms of assembly, heterodimer of a large membrane-associated beta subunit and a small pyruvoyl-containing alpha subunit. Pyruvate serves as cofactor. Is synthesized initially as an inactive proenzyme. Formation of the active enzyme involves a self-maturation process in which the active site pyruvoyl group is generated from an internal serine residue via an autocatalytic post-translational modification. Two non-identical subunits are generated from the proenzyme in this reaction, and the pyruvate is formed at the N-terminus of the alpha chain, which is derived from the carboxyl end of the proenzyme. The post-translation cleavage follows an unusual pathway, termed non-hydrolytic serinolysis, in which the side chain hydroxyl group of the serine supplies its oxygen atom to form the C-terminus of the beta chain, while the remainder of the serine residue undergoes an oxidative deamination to produce ammonia and the pyruvoyl prosthetic group on the alpha chain.

It localises to the cell membrane. The enzyme catalyses a 1,2-diacyl-sn-glycero-3-phospho-L-serine + H(+) = a 1,2-diacyl-sn-glycero-3-phosphoethanolamine + CO2. It functions in the pathway phospholipid metabolism; phosphatidylethanolamine biosynthesis; phosphatidylethanolamine from CDP-diacylglycerol: step 2/2. Catalyzes the formation of phosphatidylethanolamine (PtdEtn) from phosphatidylserine (PtdSer). This chain is Phosphatidylserine decarboxylase proenzyme, found in Mycobacteroides abscessus (strain ATCC 19977 / DSM 44196 / CCUG 20993 / CIP 104536 / JCM 13569 / NCTC 13031 / TMC 1543 / L948) (Mycobacterium abscessus).